A 101-amino-acid chain; its full sequence is Small ribosomal subunit protein uS14 (101 aa).

The tract at residues 50 to 70 (SLPRDSSPSRQRKRCRQTGRP) is disordered. Residues 59 to 68 (RQRKRCRQTG) are compositionally biased toward basic residues.

The protein belongs to the universal ribosomal protein uS14 family. In terms of assembly, part of the 30S ribosomal subunit. Contacts proteins S3 and S10.

Binds 16S rRNA, required for the assembly of 30S particles and may also be responsible for determining the conformation of the 16S rRNA at the A site. This chain is Small ribosomal subunit protein uS14, found in Erwinia tasmaniensis (strain DSM 17950 / CFBP 7177 / CIP 109463 / NCPPB 4357 / Et1/99).